The chain runs to 304 residues: Acetyl-coenzyme A carboxylase carboxyl transferase subunit beta (304 aa).

The CoA carboxyltransferase N-terminal domain occupies 23-292 (VWTKCDSCGQ…PNPDAPREGE (270 aa)). Cysteine 27, cysteine 30, cysteine 46, and cysteine 49 together coordinate Zn(2+). The C4-type zinc finger occupies 27–49 (CDSCGQVLYRAELERNLEVCPKC). The segment at 281 to 304 (PAPNPDAPREGEVVPPVPDQEPEA) is disordered. Residues 295–304 (PPVPDQEPEA) show a composition bias toward pro residues.

This sequence belongs to the AccD/PCCB family. As to quaternary structure, acetyl-CoA carboxylase is a heterohexamer composed of biotin carboxyl carrier protein (AccB), biotin carboxylase (AccC) and two subunits each of ACCase subunit alpha (AccA) and ACCase subunit beta (AccD). Zn(2+) is required as a cofactor.

Its subcellular location is the cytoplasm. The enzyme catalyses N(6)-carboxybiotinyl-L-lysyl-[protein] + acetyl-CoA = N(6)-biotinyl-L-lysyl-[protein] + malonyl-CoA. It functions in the pathway lipid metabolism; malonyl-CoA biosynthesis; malonyl-CoA from acetyl-CoA: step 1/1. Functionally, component of the acetyl coenzyme A carboxylase (ACC) complex. Biotin carboxylase (BC) catalyzes the carboxylation of biotin on its carrier protein (BCCP) and then the CO(2) group is transferred by the transcarboxylase to acetyl-CoA to form malonyl-CoA. This chain is Acetyl-coenzyme A carboxylase carboxyl transferase subunit beta, found in Citrobacter koseri (strain ATCC BAA-895 / CDC 4225-83 / SGSC4696).